A 361-amino-acid polypeptide reads, in one-letter code: Tegument protein UL51 homolog (361 aa).

Residue Cys8 is the site of S-palmitoyl cysteine; by host attachment. Positions 251–299 (GDEEDEVTVMSPSPEPVQQQPPVEPVQQQPQGRGSHRRRYKESAPQETL) are disordered. Residues 266–281 (PVQQQPPVEPVQQQPQ) are compositionally biased toward low complexity.

This sequence belongs to the herpesviridae UL51 family. Oligomerizes. Interacts with UL103; this interaction mediates UL103 incorporation to virions. In terms of processing, phosphorylated. Palmitoylation is necessary for Golgi localization.

The protein localises to the virion tegument. It localises to the host cytoplasm. The protein resides in the host Golgi apparatus. Its function is as follows. Plays several roles during the time course of infection, including egress of virus particles from the perinuclear space and secondary envelopment of cytoplasmic capsids that bud into specific trans-Golgi network (TGN)-derived membranes. The sequence is that of Tegument protein UL51 homolog (UL71) from Homo sapiens (Human).